We begin with the raw amino-acid sequence, 344 residues long: N-acetyl-gamma-glutamyl-phosphate reductase (344 aa).

C147 is a catalytic residue.

This sequence belongs to the NAGSA dehydrogenase family. Type 1 subfamily.

It is found in the cytoplasm. It carries out the reaction N-acetyl-L-glutamate 5-semialdehyde + phosphate + NADP(+) = N-acetyl-L-glutamyl 5-phosphate + NADPH + H(+). Its pathway is amino-acid biosynthesis; L-arginine biosynthesis; N(2)-acetyl-L-ornithine from L-glutamate: step 3/4. Catalyzes the NADPH-dependent reduction of N-acetyl-5-glutamyl phosphate to yield N-acetyl-L-glutamate 5-semialdehyde. This Bacillus amyloliquefaciens (Bacillus velezensis) protein is N-acetyl-gamma-glutamyl-phosphate reductase.